The primary structure comprises 126 residues: Glycine cleavage system H protein (126 aa).

One can recognise a Lipoyl-binding domain in the interval 22–104 (IAYVGITDYA…YGEGWLIKMK (83 aa)). An N6-lipoyllysine modification is found at Lys63.

This sequence belongs to the GcvH family. In terms of assembly, the glycine cleavage system is composed of four proteins: P, T, L and H. The cofactor is (R)-lipoate.

In terms of biological role, the glycine cleavage system catalyzes the degradation of glycine. The H protein shuttles the methylamine group of glycine from the P protein to the T protein. The protein is Glycine cleavage system H protein of Bacteroides thetaiotaomicron (strain ATCC 29148 / DSM 2079 / JCM 5827 / CCUG 10774 / NCTC 10582 / VPI-5482 / E50).